The sequence spans 262 residues: T-cell surface glycoprotein YE1/48 (262 aa).

The Cytoplasmic segment spans residues 1 to 44 (MSEQEVTYSMVRFHKSAGLQKQVRPEETKGPREAGYRRCSFHWK). A helical; Signal-anchor for type II membrane protein transmembrane segment spans residues 45-66 (FIVIALGIFCFLLLVAVSVLAI). Over 67 to 262 (KIFQYDQQKN…CGKRLDKFPH (196 aa)) the chain is Extracellular. N86, N103, and N123 each carry an N-linked (GlcNAc...) asparagine glycan. Residues 137–139 (RGD) carry the Cell attachment site motif. A C-type lectin domain is found at 138-257 (GDKVYWFCYG…VFICICGKRL (120 aa)). 4 disulfides stabilise this stretch: C145/C150, C163/C251, C167/C253, and C232/C245.

Homodimer; disulfide-linked. As to expression, high, in T-lymphoma lines, very low in normal lymphocytes.

It localises to the membrane. Its function is as follows. Receptor on natural killer (NK) cells for H-2d alleles. Inhibits the activity of NK cells thus preventing cell lysis. The protein is T-cell surface glycoprotein YE1/48 (Klra1) of Mus musculus (Mouse).